The following is a 52-amino-acid chain: Large ribosomal subunit protein bL33 (52 aa).

This sequence belongs to the bacterial ribosomal protein bL33 family.

In Helicobacter acinonychis (strain Sheeba), this protein is Large ribosomal subunit protein bL33.